A 440-amino-acid chain; its full sequence is GTPase Der (440 aa).

2 consecutive EngA-type G domains span residues Pro-4–Lys-168 and Ile-177–Ser-352. GTP is bound by residues Gly-10 to Ser-17, Asp-57 to Leu-61, Asn-120 to Glu-123, Gly-183 to Ser-190, Asp-230 to Met-234, and Asn-295 to Asp-298. The KH-like domain maps to Met-353 to Thr-437.

The protein belongs to the TRAFAC class TrmE-Era-EngA-EngB-Septin-like GTPase superfamily. EngA (Der) GTPase family. As to quaternary structure, associates with the 50S ribosomal subunit.

Functionally, GTPase that plays an essential role in the late steps of ribosome biogenesis. The sequence is that of GTPase Der from Pelotomaculum thermopropionicum (strain DSM 13744 / JCM 10971 / SI).